Here is a 193-residue protein sequence, read N- to C-terminus: dCTP deaminase (193 aa).

DCTP is bound by residues 110-115, Asp128, 136-138, Tyr171, Lys178, and Gln182; these read RSSLAR and VLE. Glu138 serves as the catalytic Proton donor/acceptor.

It belongs to the dCTP deaminase family. Homotrimer.

The enzyme catalyses dCTP + H2O + H(+) = dUTP + NH4(+). It functions in the pathway pyrimidine metabolism; dUMP biosynthesis; dUMP from dCTP (dUTP route): step 1/2. Functionally, catalyzes the deamination of dCTP to dUTP. This Aeromonas salmonicida (strain A449) protein is dCTP deaminase.